The chain runs to 416 residues: Beta sliding clamp (416 aa).

It belongs to the beta sliding clamp family. As to quaternary structure, forms a ring-shaped head-to-tail homodimer around DNA which binds and tethers DNA polymerases and other proteins to the DNA. The DNA replisome complex has a single clamp-loading complex (3 tau and 1 each of delta, delta', psi and chi subunits) which binds 3 Pol III cores (1 core on the leading strand and 2 on the lagging strand) each with a beta sliding clamp dimer. Additional proteins in the replisome are other copies of gamma, psi and chi, Ssb, DNA helicase and RNA primase.

It is found in the cytoplasm. Confers DNA tethering and processivity to DNA polymerases and other proteins. Acts as a clamp, forming a ring around DNA (a reaction catalyzed by the clamp-loading complex) which diffuses in an ATP-independent manner freely and bidirectionally along dsDNA. Initially characterized for its ability to contact the catalytic subunit of DNA polymerase III (Pol III), a complex, multichain enzyme responsible for most of the replicative synthesis in bacteria; Pol III exhibits 3'-5' exonuclease proofreading activity. The beta chain is required for initiation of replication as well as for processivity of DNA replication. This chain is Beta sliding clamp (dnaN), found in Chlamydia trachomatis serovar D (strain ATCC VR-885 / DSM 19411 / UW-3/Cx).